The chain runs to 143 residues: Transcriptional regulator MraZ (143 aa).

SpoVT-AbrB domains follow at residues 5 to 47 (EYSH…PMAV) and 76 to 119 (ALEA…SAEN).

It belongs to the MraZ family. Forms oligomers.

Its subcellular location is the cytoplasm. The protein localises to the nucleoid. The protein is Transcriptional regulator MraZ of Leuconostoc mesenteroides subsp. mesenteroides (strain ATCC 8293 / DSM 20343 / BCRC 11652 / CCM 1803 / JCM 6124 / NCDO 523 / NBRC 100496 / NCIMB 8023 / NCTC 12954 / NRRL B-1118 / 37Y).